The primary structure comprises 154 residues: UPF0178 protein H16_B0290 (154 aa).

Belongs to the UPF0178 family.

In Cupriavidus necator (strain ATCC 17699 / DSM 428 / KCTC 22496 / NCIMB 10442 / H16 / Stanier 337) (Ralstonia eutropha), this protein is UPF0178 protein H16_B0290.